A 632-amino-acid polypeptide reads, in one-letter code: Chaperone protein HtpG (632 aa).

An a; substrate-binding region spans residues 1-345 (MTTAAHAETL…SKDLSLNVSR (345 aa)). The interval 346–561 (ELLQKDPQVD…EHDMGYQMRR (216 aa)) is b. Residues 562–632 (LMEAAGQPLP…VQRLNKLLSH (71 aa)) form a c region.

Belongs to the heat shock protein 90 family. Homodimer.

It is found in the cytoplasm. In terms of biological role, molecular chaperone. Has ATPase activity. This chain is Chaperone protein HtpG, found in Chromohalobacter salexigens (strain ATCC BAA-138 / DSM 3043 / CIP 106854 / NCIMB 13768 / 1H11).